A 540-amino-acid chain; its full sequence is Light-independent protochlorophyllide reductase subunit B (540 aa).

Residue aspartate 36 participates in [4Fe-4S] cluster binding. Aspartate 292 functions as the Proton donor in the catalytic mechanism. 428–429 (GL) lines the substrate pocket. Residues 451–490 (SNVASGVEPSTPSVSSEVSASSSASPEASAPTPSPDGDMV) form a disordered region. Over residues 457 to 481 (VEPSTPSVSSEVSASSSASPEASAP) the composition is skewed to low complexity.

This sequence belongs to the ChlB/BchB/BchZ family. Protochlorophyllide reductase is composed of three subunits; BchL, BchN and BchB. Forms a heterotetramer of two BchB and two BchN subunits. It depends on [4Fe-4S] cluster as a cofactor.

It carries out the reaction chlorophyllide a + oxidized 2[4Fe-4S]-[ferredoxin] + 2 ADP + 2 phosphate = protochlorophyllide a + reduced 2[4Fe-4S]-[ferredoxin] + 2 ATP + 2 H2O. The protein operates within porphyrin-containing compound metabolism; bacteriochlorophyll biosynthesis (light-independent). Functionally, component of the dark-operative protochlorophyllide reductase (DPOR) that uses Mg-ATP and reduced ferredoxin to reduce ring D of protochlorophyllide (Pchlide) to form chlorophyllide a (Chlide). This reaction is light-independent. The NB-protein (BchN-BchB) is the catalytic component of the complex. This is Light-independent protochlorophyllide reductase subunit B from Chlorobium chlorochromatii (strain CaD3).